Here is a 25-residue protein sequence, read N- to C-terminus: Dermaseptin-DI5 (25 aa).

Belongs to the frog skin active peptide (FSAP) family. Dermaseptin subfamily. Expressed by the skin glands.

The protein resides in the secreted. Antibacterial peptide with activity against Gram-positive bacteria S.aureus and E.faecalis, and Gram-negative bacteria P.aeruginosa and E.coli. This chain is Dermaseptin-DI5, found in Phyllomedusa distincta (Monkey frog).